A 125-amino-acid chain; its full sequence is RutC family protein aq_364 (125 aa).

This sequence belongs to the RutC family.

In Aquifex aeolicus (strain VF5), this protein is RutC family protein aq_364.